The following is a 503-amino-acid chain: Lactation elevated protein 1 homolog B (503 aa).

Residues 108-155 (LQNQPTSELQDKVGSRETVNICRPDENVSNEKEDQQEESSKPHPPQGY) form a disordered region. Residues 130–148 (RPDENVSNEKEDQQEESSK) are compositionally biased toward basic and acidic residues. 159 to 166 (GNVGTGKT) is an ATP binding site.

This sequence belongs to the AFG1 ATPase family.

The protein is Lactation elevated protein 1 homolog B (lace1b) of Danio rerio (Zebrafish).